The primary structure comprises 504 residues: Anaerobic nitric oxide reductase transcription regulator NorR (504 aa).

Asp-57 bears the 4-aspartylphosphate mark. One can recognise a Sigma-54 factor interaction domain in the interval 187–416; that stretch reads MIGLSPGMTQ…LEHAIHRAVV (230 aa). Residues 215-222 and 278-287 contribute to the ATP site; these read GETGTGKE and ADNGTLFLDE. Residues 479-498 constitute a DNA-binding region (H-T-H motif); it reads WAACARMLETDVANLHRLAK.

Its pathway is nitrogen metabolism; nitric oxide reduction. Required for the expression of anaerobic nitric oxide (NO) reductase, acts as a transcriptional activator for at least the norVW operon. Activation also requires sigma-54. This is Anaerobic nitric oxide reductase transcription regulator NorR from Escherichia coli O45:K1 (strain S88 / ExPEC).